The chain runs to 438 residues: GTPase Der (438 aa).

EngA-type G domains follow at residues 4–168 and 177–352; these read PLVT…KSEG and IKIA…DNYS. GTP is bound by residues 10–17, 57–61, 120–123, 183–190, 230–234, and 295–298; these read GRPNVGKS, DTGGI, NKID, GKPNVGKS, DTAGL, and NKWD. One can recognise a KH-like domain in the interval 353 to 437; that stretch reads KRIATGVLND…GIKMIFKERK (85 aa).

This sequence belongs to the TRAFAC class TrmE-Era-EngA-EngB-Septin-like GTPase superfamily. EngA (Der) GTPase family. Associates with the 50S ribosomal subunit.

In terms of biological role, GTPase that plays an essential role in the late steps of ribosome biogenesis. The protein is GTPase Der of Clostridium acetobutylicum (strain ATCC 824 / DSM 792 / JCM 1419 / IAM 19013 / LMG 5710 / NBRC 13948 / NRRL B-527 / VKM B-1787 / 2291 / W).